The following is a 253-amino-acid chain: N-acetylmuramoyl-L-alanine amidase CwlM (253 aa).

The region spanning 4 to 172 (IFIDPGHGGS…IARGHANGLA (169 aa)) is the MurNAc-LAA domain. The SPOR domain occupies 179–253 (KNAAALYKVQ…AEFDTFIYQE (75 aa)). 2 consecutive repeat copies span residues 184-219 (LYKVQIAAFRTKANADSLAAQAEAKGFDALVIYRDS) and 220-253 (LYKVQIGAFSSKENAEALVQQAKNAEFDTFIYQE). A 2 X 35 AA approximate tandem repeats region spans residues 184–253 (LYKVQIAAFR…AEFDTFIYQE (70 aa)).

This sequence belongs to the N-acetylmuramoyl-L-alanine amidase 3 family.

It is found in the secreted. The enzyme catalyses Hydrolyzes the link between N-acetylmuramoyl residues and L-amino acid residues in certain cell-wall glycopeptides.. Its function is as follows. Hydrolyzes the cell wall of M.luteus more efficiently than that of B.licheniformis and B.subtilis. The C-terminal region, including the repeats, determines substrate specificity. This chain is N-acetylmuramoyl-L-alanine amidase CwlM (cwlM), found in Bacillus licheniformis.